A 505-amino-acid polypeptide reads, in one-letter code: Metal transporter Nramp3.2 (505 aa).

The next 12 helical transmembrane spans lie at 50–70 (LWLFTGPGFLMSIAFLDPGNL), 78–98 (AIAGYSLLWLLLWATAMGLLV), 127–147 (MVLWIMAELALIGADIQEVIG), 159–179 (FVPLWAGVTITACDCFIFLFL), 187–207 (LEAVFAVLIGIMAVTFGWMFA), 233–253 (AVGVVGCIIMPHNVFLHSALV), 280–300 (ALVISFVINLFVTTVFAKGFY), 321–341 (YGGGFFPILYIWGIGLLAAGQ), 369–389 (ALITRSCAIIPTMIVALVFDT), 400–420 (WLNVLQSIQIPFALIPLLCLV), 439–459 (AWLVAALVMVINGYLLLDFFF), and 466–486 (AFTTVVCGFTGAYVAFIIYLI).

It belongs to the NRAMP (TC 2.A.55) family. In terms of tissue distribution, expressed in roots, stems, buds and leaves.

The protein resides in the vacuole membrane. The enzyme catalyses Mn(2+)(in) = Mn(2+)(out). It catalyses the reaction Fe(2+)(in) = Fe(2+)(out). Functionally, divalent metal transporter. Can transport manganese (Mn) and iron (Fe). Involved in the release of metals stored in the vacuole. The chain is Metal transporter Nramp3.2 from Populus trichocarpa (Western balsam poplar).